The sequence spans 503 residues: ATP-dependent RNA helicase dbp3 (503 aa).

Over residues 1–13 the composition is skewed to basic and acidic residues; that stretch reads MGKRVSHNEGADR. The segment at 1–37 is disordered; sequence MGKRVSHNEGADRRPKKKAKNEKPEKETMESPAADVT. Positions 104–112 match the Q motif motif; the sequence is SFASPTPIQ. In terms of domain architecture, Helicase ATP-binding spans 116-292; sequence WPLLFAGRDV…ATFMTSAVTV (177 aa). 129-136 provides a ligand contact to ATP; it reads AETGSGKT. Residues 239–242 carry the DEAD box motif; sequence DEAD. Residues 323–472 form the Helicase C-terminal domain; the sequence is RLVQLLSENQ…EVPQELLKFG (150 aa).

The protein belongs to the DEAD box helicase family. DDX5/DBP2 subfamily.

It is found in the nucleus. The protein resides in the nucleolus. It carries out the reaction ATP + H2O = ADP + phosphate + H(+). In terms of biological role, ATP-dependent RNA helicase required for 60S ribosomal subunit synthesis. Involved in efficient pre-rRNA processing, predominantly at site A3, which is necessary for the normal formation of 25S and 5.8S rRNAs. The protein is ATP-dependent RNA helicase dbp3 (dbp3) of Aspergillus clavatus (strain ATCC 1007 / CBS 513.65 / DSM 816 / NCTC 3887 / NRRL 1 / QM 1276 / 107).